We begin with the raw amino-acid sequence, 689 residues long: MNFENLLIELGTEELPPKSLRKLAESFLANFTEELTKADLAFSSAVWYAAPRRLAINVTELALAQADKVVEKRGPAVSSAFDAEGKPTKAAEGWARGNGITVEQAERLVTDKGEWLVHNAKVEGVETKSLIAAMAQRALDKLPIPKPMRWGNNKTQFIRPVHTATMLLGSELIEGELLGIKSARTVRGHRFMGQASFELAHADHYLADLKEKGKVIADYEVRKTLIKADAEKAAAKIGGKADIEDSLLEEVASLVEWPVVLTASFEEKFLNVPSEALVYTMKGDQKYFPVFDEAGKLLPNFIFVTNIESKDPAQIISGNEKVVRPRLADAEFFFNTDKKHTLESRLPSLETVLFQQQLGTLKDKVNRISALAAFIAEQTGANAVDAARAGLLSKTDLMTNMVMEFTDTQGTMGMHYARLDGETEAVAVAMEEQYKPKFSGDTVPSAGVSCAVALADKLDTLVGIFGIGQAPKGAADPFALRRAAIGVLRIIVENKLPLDLVDLIAKAQALHGTNLSNANASDEVLEFLMARFRAWYQDKGIGVDVILAVLARRPTRPADFDSRINAVSHFRSLEASSALAAANKRVSNILAKVEGALPTTINANLLTEAAEQALAAKLNELQPLLAPLFANADYQQALTLLAGLRESVDQFFEDVMVMADDEALKNNRLALLNNLREQFLHVADISLLQ.

The protein belongs to the class-II aminoacyl-tRNA synthetase family. In terms of assembly, tetramer of two alpha and two beta subunits.

Its subcellular location is the cytoplasm. It carries out the reaction tRNA(Gly) + glycine + ATP = glycyl-tRNA(Gly) + AMP + diphosphate. This chain is Glycine--tRNA ligase beta subunit, found in Shewanella baltica (strain OS185).